Consider the following 579-residue polypeptide: Glutamate--tRNA ligase (579 aa).

Positions 114–124 (PNPNGPWHIGH) match the 'HIGH' region motif.

It belongs to the class-I aminoacyl-tRNA synthetase family. Glutamate--tRNA ligase type 2 subfamily.

The protein localises to the cytoplasm. It carries out the reaction tRNA(Glu) + L-glutamate + ATP = L-glutamyl-tRNA(Glu) + AMP + diphosphate. In terms of biological role, catalyzes the attachment of glutamate to tRNA(Glu) in a two-step reaction: glutamate is first activated by ATP to form Glu-AMP and then transferred to the acceptor end of tRNA(Glu). The protein is Glutamate--tRNA ligase of Haloarcula marismortui (strain ATCC 43049 / DSM 3752 / JCM 8966 / VKM B-1809) (Halobacterium marismortui).